Here is a 121-residue protein sequence, read N- to C-terminus: Large ribosomal subunit protein bL12 (121 aa).

Belongs to the bacterial ribosomal protein bL12 family. As to quaternary structure, homodimer. Part of the ribosomal stalk of the 50S ribosomal subunit. Forms a multimeric L10(L12)X complex, where L10 forms an elongated spine to which 2 to 4 L12 dimers bind in a sequential fashion. Binds GTP-bound translation factors.

Its function is as follows. Forms part of the ribosomal stalk which helps the ribosome interact with GTP-bound translation factors. Is thus essential for accurate translation. This is Large ribosomal subunit protein bL12 from Leuconostoc citreum (strain KM20).